The sequence spans 1125 residues: Speract receptor (1125 aa).

A signal peptide spans 1–21; that stretch reads MAHARHLFLFMVAFTITMVIA. The Extracellular portion of the chain corresponds to 22–510; the sequence is RLDFNPTIIN…GELCTNWALY (489 aa). 2 N-linked (GlcNAc...) asparagine glycosylation sites follow: asparagine 185 and asparagine 409. Residues 511 to 531 traverse the membrane as a helical segment; sequence LGASIPTFLIIFGGLIGFFIY. The Cytoplasmic portion of the chain corresponds to 532-1125; that stretch reads RKRAYEAALD…AANRVIPDDV (594 aa). The region spanning 571-839 is the Protein kinase domain; sequence MSAISVISNA…PNIMAVRTML (269 aa). The 131-residue stretch at 914 to 1044 folds into the Guanylate cyclase domain; that stretch reads SIFFSDIVGF…DTVNTASRME (131 aa).

This sequence belongs to the adenylyl cyclase class-4/guanylyl cyclase family.

Its subcellular location is the membrane. The enzyme catalyses GTP = 3',5'-cyclic GMP + diphosphate. Functionally, implicated as a cell-surface receptor on spermatozoa for 'speract' a chemotactic peptide, and on various other cells as a receptor for atrial natriuretic peptide. This Strongylocentrotus purpuratus (Purple sea urchin) protein is Speract receptor.